Reading from the N-terminus, the 198-residue chain is Recombination protein RecR (198 aa).

Residues 57–72 form a C4-type zinc finger; it reads CSVCGRLTDDDPCIIC. In terms of domain architecture, Toprim spans 80–175; that stretch reads TKILVVEDSK…KVTRLARGLA (96 aa).

The protein belongs to the RecR family.

May play a role in DNA repair. It seems to be involved in an RecBC-independent recombinational process of DNA repair. It may act with RecF and RecO. This Streptococcus thermophilus (strain CNRZ 1066) protein is Recombination protein RecR.